Reading from the N-terminus, the 429-residue chain is Phosphoribosylamine--glycine ligase (429 aa).

In terms of domain architecture, ATP-grasp spans 109–316 (KDFLARHNIP…LVELCLAACE (208 aa)). Residue 135-196 (LREKGAPIVI…EEFLDGEEAS (62 aa)) coordinates ATP. A disordered region spans residues 212–236 (SQDHKRVGDKDTGPNTGGMGAYSPA). Over residues 213–223 (QDHKRVGDKDT) the composition is skewed to basic and acidic residues. Mg(2+)-binding residues include glutamate 286 and asparagine 288.

Belongs to the GARS family. In terms of assembly, monomer. The cofactor is Mg(2+). Requires Mn(2+) as cofactor.

It catalyses the reaction 5-phospho-beta-D-ribosylamine + glycine + ATP = N(1)-(5-phospho-beta-D-ribosyl)glycinamide + ADP + phosphate + H(+). Its pathway is purine metabolism; IMP biosynthesis via de novo pathway; N(1)-(5-phospho-D-ribosyl)glycinamide from 5-phospho-alpha-D-ribose 1-diphosphate: step 2/2. The sequence is that of Phosphoribosylamine--glycine ligase from Escherichia coli O6:H1 (strain CFT073 / ATCC 700928 / UPEC).